Reading from the N-terminus, the 778-residue chain is Kin of IRRE-like protein 3 (778 aa).

The N-terminal stretch at 1–21 (MKPFQLDLLFVCFFLFSQELG) is a signal peptide. The Extracellular segment spans residues 22 to 535 (LQKRGCCLVL…GLEAESVPMA (514 aa)). Ig-like C2-type domains are found at residues 48 to 142 (YSFS…ARLT), 147 to 243 (PDDP…TSVT), 249 to 330 (PPLV…RTVD), 335 to 415 (PRMT…VTLT), and 419 to 515 (PPII…IRLK). A disulfide bridge links cysteine 69 with cysteine 127. Residue asparagine 167 is glycosylated (N-linked (GlcNAc...) asparagine). Cysteine 170 and cysteine 227 are disulfide-bonded. N-linked (GlcNAc...) asparagine glycosylation occurs at asparagine 253. A disulfide bond links cysteine 271 and cysteine 314. Residue asparagine 324 is glycosylated (N-linked (GlcNAc...) asparagine). Intrachain disulfides connect cysteine 356–cysteine 398 and cysteine 440–cysteine 499. Residue asparagine 498 is glycosylated (N-linked (GlcNAc...) asparagine). Residues 536–556 (VIIGVAVGAGVAFLVLMATIV) form a helical membrane-spanning segment. At 557-778 (AFCCARSQRN…PLQRRMQTHV (222 aa)) the chain is on the cytoplasmic side. The segment covering 727–736 (CDSSVSSSGK) has biased composition (polar residues). The segment at 727–778 (CDSSVSSSGKQDGYVQFDKASKASASSSHHSQSSSQNSDPSRPLQRRMQTHV) is disordered. A compositionally biased stretch (low complexity) spans 748-762 (KASASSSHHSQSSSQ).

Belongs to the immunoglobulin superfamily. Homodimer; mediates homophilic interactions to promote cell adhesion. Interacts with NPHS1; forms heterodimers with NPHS1. Interacts with NPHS2/podocin (via the C-terminus). Interacts with CASK. Interacts (via extracellular region) with MAP1B. Interacts (via extracellular region) with MYO16. Interacts (via intracellular region) with ATP1B1. Interacts (via intracellular region) with SHMT2. Interacts (via intracellular region) with UFC1. Undergoes proteolysis by a metalloprotease and gives rise to a soluble form. Expressed in fetal and adult brain. Also expressed in kidney, specifically in podocytes of kidney glomeruli. Also expressed in skeletal muscle.

It localises to the cell membrane. The protein localises to the secreted. In terms of biological role, synaptic adhesion molecule required for the formation of target-specific synapses. Required for formation of target-specific synapses at hippocampal mossy fiber synapses. Required for formation of mossy fiber filopodia, the synaptic structures connecting dentate granule and GABA neurons. Probably acts as a homophilic adhesion molecule that promotes trans-cellular interactions and stabilize mossy fiber filipodia contact and subsequent synapse formation. Required for the coalescence of vomeronasal sensory neuron axons. May be involved in the hematopoietic supportive capacity of stroma cells; the secreted extracellular domain is directly responsible for supporting hematopoietic stem cells. The chain is Kin of IRRE-like protein 3 from Homo sapiens (Human).